The primary structure comprises 770 residues: Transducin-like enhancer protein 1 (770 aa).

The tract at residues 1–131 (MFPQSRHPTP…IIGQQQLQAQ (131 aa)) is q domain. Disordered stretches follow at residues 128-157 (LQAQHLSHGHGPPVPLTPHPSGLQPPGIPP) and 176-346 (HLAI…PAME). The tract at residues 132 to 199 (HLSHGHGPPV…RHRDRESGTS (68 aa)) is GP domain. Residues 146–157 (HPSGLQPPGIPP) are compositionally biased toward low complexity. 2 stretches are compositionally biased toward basic and acidic residues: residues 178-196 (AIKDDKKHHDAERHRDRES) and 209-244 (RSTDKRRNGPEFSSDIKKRKVDDKDNYDSDGDKSDD). Residues 200–266 (NSLLVPDSLR…SPHASPTHSP (67 aa)) are ccN domain. The Nuclear localization signal signature appears at 225 to 228 (KKRK). Ser-237 carries the post-translational modification Phosphoserine; by CK2. The segment covering 255–264 (PSSPHASPTH) has biased composition (low complexity). Residues Ser-257, Ser-261, and Ser-265 each carry the phosphoserine; by CDK1 modification. The segment covering 265–281 (SPRENGIDKNRLLKKDA) has biased composition (basic and acidic residues). An SP domain region spans residues 267 to 450 (RENGIDKNRL…GGKPAYSFHV (184 aa)). Low complexity predominate over residues 282–297 (SGSPASTASSGSSSSL). Ser-284 bears the Phosphoserine mark. A compositionally biased stretch (basic and acidic residues) spans 298–308 (KSKEVSLHEKA). 6 WD repeats span residues 470 to 501 (GIPRHARQINTLNHGEVVCAVTISNPTRHVYT), 528 to 558 (NRDNYIRSCKLLPDGCTLIVGGEASTLSIWD), 572 to 602 (SSAPACYALAISPDSKVCFSCCSDGNIAVWD), 614 to 644 (GHTDGASCIDISNDGTKLWTGGLDNTVRSWD), 696 to 726 (LHESCVLSLKFAYCGKWFVSTGKDNLLNAWR), and 737 to 767 (KESSSVLSCDISVDDKYIVTGSGDKKATVYE).

It belongs to the WD repeat Groucho/TLE family. In terms of assembly, homooligomer and heterooligomer with other family members. Binds RUNX1, RUNX3, FOXA2, KDM6A, UTY, histone H3, HESX1, ESRRG and the NF-kappa-B subunit RELA. Interacts with HES1 (via WRPW motif). Binds TCF7, LEF1, TCF7L1 and TCF7L2. Interacts with SIX3. Interacts with EFNB1. Interacts with TLE4. Interacts with FOXG1/BF-1; the interaction is inhibited by TLE6/GRG6. In terms of processing, phosphorylated, probably by CDK1. The degree of phosphorylation varies throughout the cell cycle, and is highest at the G2/M transition. Becomes hyperphosphorylated in response to cell differentiation and interaction with HES1 or RUNX1. Post-translationally, ubiquitinated by XIAP/BIRC4. In terms of tissue distribution, highly expressed in liver and lung. Detected at slightly lower levels in heart, brain, kidney and testis. Detected in fetal and adult stomach and small intestine, in adult ileum, duodenum and colon. Expressed in bone marrow-derived macrophages. Most abundant at the base of the crypts of Lieberkuhn in the small intestine.

The protein localises to the nucleus. It localises to the cytoplasm. Functionally, transcriptional corepressor that binds to a number of transcription factors. Inhibits NF-kappa-B-regulated gene expression. Inhibits the transcriptional activation mediated by FOXA2, and by CTNNB1 and TCF family members in Wnt signaling. Enhances FOXG1/BF-1- and HES1-mediated transcriptional repression. The effects of full-length TLE family members may be modulated by association with dominant-negative AES. Unusual function as coactivator for ESRRG. The sequence is that of Transducin-like enhancer protein 1 (Tle1) from Mus musculus (Mouse).